Here is a 333-residue protein sequence, read N- to C-terminus: MKGEAGHMLHNEKSKQEGHIWGSMRRTAFILGSGLLSFVAFWNSVTWHLQRFWGASGYFWQAQWERLLTTFEGKEWILFFIGAIQVPCLFFWSFNGLLLVVDTTGKPNFISRYRIQVGKNEPVDPVKLRQSIRTVLFNQCMISFPMVVFLYPFLKWWRDPCRRELPTFHWFLLELAIFTLIEEVLFYYSHRLLHHPTFYKKIHKKHHEWTAPIGVISLYAHPIEHAVSNMLPVIVGPLVMGSHLSSITMWFSLALIITTISHCGYHLPFLPSPEFHDYHHLKFNQCYGVLGVLDHLHGTDTMFKQTKAYERHVLLLGFTPLSESIPDSPKRME.

Helical transmembrane passes span 29 to 49 (FILG…TWHL), 77 to 97 (ILFF…FNGL), 134 to 154 (TVLF…YPFL), 168 to 188 (FHWF…LFYY), 215 to 235 (VISL…PVIV), and 237 to 257 (PLVM…ALII). The region spanning 176-299 (AIFTLIEEVL…LGVLDHLHGT (124 aa)) is the Fatty acid hydroxylase domain.

Belongs to the sterol desaturase family. As to expression, down-regulated in primary acute myeloid leukemia (AML) patients.

It is found in the cytoplasm. It localises to the membrane. Promotes megakaryocyte differentiation by enhancing ERK phosphorylation and up-regulating RUNX1 expression. The sequence is that of Fatty acid hydroxylase domain-containing protein 2 (FAXDC2) from Homo sapiens (Human).